Here is a 78-residue protein sequence, read N- to C-terminus: Protein GPR15LG (78 aa).

The N-terminal stretch at 1 to 24 (MRLLALSGLLCMLLLCFCIFSSEG) is a signal peptide. Intrachain disulfides connect cysteine 37–cysteine 60 and cysteine 38–cysteine 57.

As to quaternary structure, interacts with SUSD2; the interaction is direct. Highly abundant in the testis, colon, eye, and tongue. Detected in the epithelial layer of the colon, but not the small intestine.

Its subcellular location is the secreted. In terms of biological role, highly cationic protein that has multiple functions. Acts as a chemotactic factor that mediates lymphocytes recruitment to epithelia through binding and activation of the G-protein coupled receptor GPR15. May be a tumor suppressor; together with SUSD2 has a growth inhibitory effect on colon cancer cells which includes G1 cell cycle arrest. May regulate keratinocyte proliferation. In addition, through activation of Mas-related G protein-coupled receptors (MRGPRs) contributes to pruritogenesis by activating itch-selective sensory neurons and mast cells degranulation. Functionally, has antimicrobial activity against Gram-positive bacteria, including Staphylococcus aureus and Actinomyces spec., and Mycoplasma hominis and lentivirus. The chain is Protein GPR15LG (Gpr15lg) from Mus musculus (Mouse).